The chain runs to 248 residues: UPF0328 protein ECU06_0030/ECU06_1690/ECU11_0020 (248 aa).

2 disordered regions span residues 1–34 and 51–81; these read MVRH…HPSR and ASAE…ILPD. Polar residues-rich tracts occupy residues 10–19 and 61–76; these read PKTTNPNPES and QNLS…THQS.

The protein belongs to the UPF0328 family.

The sequence is that of UPF0328 protein ECU06_0030/ECU06_1690/ECU11_0020 from Encephalitozoon cuniculi (strain GB-M1) (Microsporidian parasite).